The chain runs to 85 residues: Protein RALF-like 28 (85 aa).

The first 31 residues, 1-31 (MSILKETKRFMVVAMFIACVFISNNMNVAVA), serve as a signal peptide directing secretion. Intrachain disulfides connect Cys-48–Cys-53 and Cys-66–Cys-72. The interval 60 to 85 (NPYHRGCEKSKRCRGPDPPALPRKMI) is disordered. Over residues 75–85 (PDPPALPRKMI) the composition is skewed to pro residues.

Belongs to the plant rapid alkalinization factor (RALF) family.

Its subcellular location is the secreted. Functionally, cell signaling peptide that may regulate plant stress, growth, and development. Mediates a rapid alkalinization of extracellular space by mediating a transient increase in the cytoplasmic Ca(2+) concentration leading to a calcium-dependent signaling events through a cell surface receptor and a concomitant activation of some intracellular mitogen-activated protein kinases. The sequence is that of Protein RALF-like 28 (RALFL28) from Arabidopsis thaliana (Mouse-ear cress).